A 312-amino-acid polypeptide reads, in one-letter code: GATA zinc finger domain-containing protein 20 (312 aa).

2 disordered regions span residues 1–45 and 213–232; these read MGKR…PQQP and TIGS…TNTN. Low complexity predominate over residues 29–45; it reads QQQQQQQEQQPQQPQQP. The GATA-type zinc-finger motif lies at 260 to 287; it reads CYVCGVTETPYWRRGTDEGVMVDLCNAC.

The protein is GATA zinc finger domain-containing protein 20 (gtaT) of Dictyostelium discoideum (Social amoeba).